We begin with the raw amino-acid sequence, 32 residues long: Photosystem II reaction center protein T (32 aa).

A helical membrane pass occupies residues Ala-3–Phe-23.

This sequence belongs to the PsbT family. PSII is composed of 1 copy each of membrane proteins PsbA, PsbB, PsbC, PsbD, PsbE, PsbF, PsbH, PsbI, PsbJ, PsbK, PsbL, PsbM, PsbT, PsbX, PsbY, PsbZ, Psb30/Ycf12, at least 3 peripheral proteins of the oxygen-evolving complex and a large number of cofactors. It forms dimeric complexes.

The protein localises to the plastid. The protein resides in the chloroplast thylakoid membrane. Found at the monomer-monomer interface of the photosystem II (PS II) dimer, plays a role in assembly and dimerization of PSII. PSII is a light-driven water plastoquinone oxidoreductase, using light energy to abstract electrons from H(2)O, generating a proton gradient subsequently used for ATP formation. This is Photosystem II reaction center protein T from Phaeodactylum tricornutum (strain CCAP 1055/1).